The primary structure comprises 936 residues: Protocadherin alpha-5 (936 aa).

The N-terminal stretch at methionine 1 to glycine 28 is a signal peptide. Over glutamine 29 to asparagine 696 the chain is Extracellular. Cadherin domains follow at residues serine 33–phenylalanine 132, alanine 156–phenylalanine 241, aspartate 242–methionine 349, alanine 350–phenylalanine 454, alanine 455–leucine 564, and valine 580–alanine 677. 3 N-linked (GlcNAc...) asparagine glycosylation sites follow: asparagine 264, asparagine 448, and asparagine 547. The chain crosses the membrane as a helical span at residues valine 697 to tyrosine 717. Residues threonine 718 to glutamine 936 are Cytoplasmic-facing. Disordered stretches follow at residues serine 759 to arginine 793, arginine 815 to isoleucine 875, and glutamine 887 to glutamine 936. 5 PXXP repeats span residues proline 773 to proline 776, proline 785 to proline 788, proline 818 to proline 821, lysine 873 to isoleucine 876, and proline 877 to alanine 890. Positions proline 773–alanine 890 are 5 X 4 AA repeats of P-X-X-P. The span at serine 774–arginine 786 shows a compositional bias: polar residues. Over residues aspartate 895–lysine 909 the composition is skewed to basic and acidic residues.

The protein resides in the cell membrane. In terms of biological role, potential calcium-dependent cell-adhesion protein. May be involved in the establishment and maintenance of specific neuronal connections in the brain. This chain is Protocadherin alpha-5 (PCDHA5), found in Pan troglodytes (Chimpanzee).